The chain runs to 306 residues: D-aminoacyl-tRNA deacylase (306 aa).

This sequence belongs to the DtdA deacylase family. Monomer. Requires Zn(2+) as cofactor.

It catalyses the reaction a D-aminoacyl-tRNA + H2O = a tRNA + a D-alpha-amino acid + H(+). The enzyme catalyses glycyl-tRNA(Ala) + H2O = tRNA(Ala) + glycine + H(+). Functionally, D-aminoacyl-tRNA deacylase with broad substrate specificity. By recycling D-aminoacyl-tRNA to D-amino acids and free tRNA molecules, this enzyme counteracts the toxicity associated with the formation of D-aminoacyl-tRNA entities in vivo. The sequence is that of D-aminoacyl-tRNA deacylase from Methanosarcina barkeri (strain Fusaro / DSM 804).